Consider the following 159-residue polypeptide: Phosphopantetheine adenylyltransferase (159 aa).

Position 9 (Thr-9) interacts with substrate. Residues 9–10 (TF) and His-17 each bind ATP. Substrate is bound by residues Lys-41, Leu-73, and Arg-87. ATP contacts are provided by residues 88–90 (GLR), Glu-98, and 123–129 (YSFISST).

It belongs to the bacterial CoaD family. As to quaternary structure, homohexamer. The cofactor is Mg(2+).

The protein resides in the cytoplasm. It carries out the reaction (R)-4'-phosphopantetheine + ATP + H(+) = 3'-dephospho-CoA + diphosphate. The protein operates within cofactor biosynthesis; coenzyme A biosynthesis; CoA from (R)-pantothenate: step 4/5. In terms of biological role, reversibly transfers an adenylyl group from ATP to 4'-phosphopantetheine, yielding dephospho-CoA (dPCoA) and pyrophosphate. In Pseudomonas aeruginosa (strain LESB58), this protein is Phosphopantetheine adenylyltransferase.